A 132-amino-acid polypeptide reads, in one-letter code: Small ribosomal subunit protein uS8 (132 aa).

It belongs to the universal ribosomal protein uS8 family. Part of the 30S ribosomal subunit. Contacts proteins S5 and S12.

Functionally, one of the primary rRNA binding proteins, it binds directly to 16S rRNA central domain where it helps coordinate assembly of the platform of the 30S subunit. This chain is Small ribosomal subunit protein uS8, found in Bacillus subtilis (strain 168).